The following is a 1342-amino-acid chain: DNA-directed RNA polymerase subunit beta (1342 aa).

N6-acetyllysine is present on residues K1022 and K1200.

Belongs to the RNA polymerase beta chain family. In terms of assembly, the RNAP catalytic core consists of 2 alpha, 1 beta, 1 beta' and 1 omega subunit. When a sigma factor is associated with the core the holoenzyme is formed, which can initiate transcription.

It carries out the reaction RNA(n) + a ribonucleoside 5'-triphosphate = RNA(n+1) + diphosphate. DNA-dependent RNA polymerase catalyzes the transcription of DNA into RNA using the four ribonucleoside triphosphates as substrates. In Shigella flexneri serotype 5b (strain 8401), this protein is DNA-directed RNA polymerase subunit beta.